Consider the following 255-residue polypeptide: tRNA (guanine-N(1)-)-methyltransferase (255 aa).

S-adenosyl-L-methionine-binding positions include G113 and I133–L138.

The protein belongs to the RNA methyltransferase TrmD family. Homodimer.

It localises to the cytoplasm. It carries out the reaction guanosine(37) in tRNA + S-adenosyl-L-methionine = N(1)-methylguanosine(37) in tRNA + S-adenosyl-L-homocysteine + H(+). Its function is as follows. Specifically methylates guanosine-37 in various tRNAs. This Escherichia coli O6:K15:H31 (strain 536 / UPEC) protein is tRNA (guanine-N(1)-)-methyltransferase.